The primary structure comprises 271 residues: MDKYAVWGNPIAQSRSPQLHRYFAKQTRQNLDYVAILGDEEKFEQQLSDFFAQGAKGCNITAPFKERAFKLAQQHSKRCLSAESCNTLKKLADGTLFADNTDGAGLVSDLQRLNWLKPNQRILILGAGGATKGVLLPLLQAQQNILITNRTFSRAEDLAHKFNHFGTIEALDLEHIPIQTFDLIINATSTGLQGKTIDIDPQILQLASAVYDMQYSKESDTPFIALCKKQGVTKISDGFGMLVGQAAHAFYLWRGVMPEIDPLFSGNEIKI.

Shikimate is bound by residues S14–S16 and T61. K65 serves as the catalytic Proton acceptor. The shikimate site is built by N86 and D102. NADP(+) contacts are provided by residues G126–A130, N149–R154, and M213. Y215 contacts shikimate. G238 is an NADP(+) binding site.

Belongs to the shikimate dehydrogenase family. Homodimer.

It carries out the reaction shikimate + NADP(+) = 3-dehydroshikimate + NADPH + H(+). The protein operates within metabolic intermediate biosynthesis; chorismate biosynthesis; chorismate from D-erythrose 4-phosphate and phosphoenolpyruvate: step 4/7. In terms of biological role, involved in the biosynthesis of the chorismate, which leads to the biosynthesis of aromatic amino acids. Catalyzes the reversible NADPH linked reduction of 3-dehydroshikimate (DHSA) to yield shikimate (SA). In Histophilus somni (strain 129Pt) (Haemophilus somnus), this protein is Shikimate dehydrogenase (NADP(+)).